The following is an 86-amino-acid chain: Small ribosomal subunit protein uS17 (86 aa).

This sequence belongs to the universal ribosomal protein uS17 family. Part of the 30S ribosomal subunit.

Functionally, one of the primary rRNA binding proteins, it binds specifically to the 5'-end of 16S ribosomal RNA. The sequence is that of Small ribosomal subunit protein uS17 from Caldicellulosiruptor bescii (strain ATCC BAA-1888 / DSM 6725 / KCTC 15123 / Z-1320) (Anaerocellum thermophilum).